The primary structure comprises 248 residues: ATP synthase subunit a, chloroplastic (248 aa).

A run of 5 helical transmembrane segments spans residues 38-58 (QVLITSWVVIAILLGSAAIAV), 96-116 (VPFIGTLFLFIFVSNWSGALL), 135-155 (INTTVALALPTSVAYFYAGLT), 200-220 (LVVVVLVSLVPLVIPIPVMFL), and 221-241 (GLFTSGIQALIFATLAAAYIG).

The protein belongs to the ATPase A chain family. F-type ATPases have 2 components, CF(1) - the catalytic core - and CF(0) - the membrane proton channel. CF(1) has five subunits: alpha(3), beta(3), gamma(1), delta(1), epsilon(1). CF(0) has four main subunits: a, b, b' and c.

The protein localises to the plastid. It is found in the chloroplast thylakoid membrane. Functionally, key component of the proton channel; it plays a direct role in the translocation of protons across the membrane. This chain is ATP synthase subunit a, chloroplastic, found in Nymphaea alba (White water-lily).